The primary structure comprises 536 residues: GATA zinc finger domain-containing protein 9 (536 aa).

2 stretches are compositionally biased toward polar residues: residues 1–20 (MTSF…QPHS) and 36–55 (CQSS…NPNA). Disordered stretches follow at residues 1–77 (MTSF…LSGS), 183–211 (SSSL…VVRS), 237–258 (RSAF…GGGS), 273–342 (QLHY…GFVQ), and 370–423 (ALFS…NISS). The segment covering 56–72 (TTNNTTTTTTTTTTTTN) has biased composition (low complexity). A compositionally biased stretch (acidic residues) spans 188 to 206 (SEDDDCCYETEEDDNGEDG). Over residues 237 to 247 (RSAFKKNKKDY) the composition is skewed to basic residues. Polar residues predominate over residues 273–283 (QLHYSNSMTDN). Low complexity-rich tracts occupy residues 318–335 (SNSN…NNNN) and 379–399 (PSPT…NSGN). The GATA-type zinc finger occupies 479 to 504 (CRHCGTTDTPEWRRGPDGRKSLCNAC).

The protein is GATA zinc finger domain-containing protein 9 (gtaI) of Dictyostelium discoideum (Social amoeba).